Reading from the N-terminus, the 414-residue chain is Esterase FrsA (414 aa).

It belongs to the FrsA family.

The enzyme catalyses a carboxylic ester + H2O = an alcohol + a carboxylate + H(+). In terms of biological role, catalyzes the hydrolysis of esters. This Salmonella choleraesuis (strain SC-B67) protein is Esterase FrsA.